The sequence spans 1707 residues: MAGASVKVAVRVRPFNSREMSRDSKCIIQMSGSTTTIVNPKQPKETPKSFSFDYSYWSHTSPEDINYASQKQVYRDIGEEMLQHAFEGYNVCIFAYGQTGAGKSYTMMGKQEKDQQGIIPQLCEDLFSRINDTTNDNMSYSVEVSYMEIYCERVRDLLNPKNKGNLRVREHPLLGPYVEDLSKLAVTSYNDIQDLMDSGNKARTVAATNMNETSSRSHAVFNIIFTQKRHDAETNITTEKVSKISLVDLAGSERADSTGAKGTRLKEGANINKSLTTLGKVISALAEMDSGPNKNKKKKKTDFIPYRDSVLTWLLRENLGGNSRTAMVAALSPADINYDETLSTLRYADRAKQIRCNAIINEDPNNKLIRELKDEVTRLRDLLYAQGLGDITDTNTVPGGPKLTNALVGMSPSSSLSALSSRAASVSSLHERILFAPGSEEAIERLKETEKIIAELNETWEEKLRRTEAIRMEREALLAEMGVAMREDGGTLGVFSPKKTPHLVNLNEDPLMSECLLYYIKDGVTRVGREDAERRQDIVLSGHFIKEEHCIFRSDSRGGGEAVVTLEPCEGADTYVNGKKVTEPSILRSGNRIIMGKSHVFRFNHPEQARQERERTPCAETPAEPVDWAFAQRELLEKQGIDMKQEMEQRLQELEDQYRREREEATYLLEQQRLDYESKLEALQKQMDSRYYPEVNEEEEEPEDEVQWTERECELALWAFRKWKWYQFTSLRDLLWGNAIFLKEANAISVELKKKVQFQFVLLTDTLYSPLPPDLLPPEAAKDRETRPFPRTIVAVEVQDQKNGATHYWTLEKLRQRLDLMREMYDRAAEVPSSVVEDCDNVVTGGDPFYDRFPWFRLVGRAFVYLSNLLYPVPLVHRVAIVSEKGEVKGFLRVAVQAISADEEAPDYGSGVRQSGTAKISFDDQHFEKFQSESCPVVGMSRSGTSQEELRIVEGQGQGADAGPSADEVNNNTCSAVPPEGLLDSPEKAALDGPLDTALDHLRLGSTFTFRVTVLQASSISAEYADIFCQFNFIHRHDEAFSTEPLKNTGRGPPLGFYHVQNIAVEVTKSFIEYIKSQPIVFEVFGHYQQHPFPPLCKDVLSPLRPSRRHFPRVMPLSKPVPATKLSTMTRPSPGPCHCKYDLLVYFEICELEANGDYIPAVVDHRGGMPCMGTFLLHQGIQRRITVTLLHETGSHIRWKEVRELVVGRIRNTPETDEALIDPNILSLNILSSGYVHPAQDDRQFLDSDIPRTFYQFEAAWDSSMHNSLLLNRVTPYREKIYMTLSAYIEMENCTQPAVITKDFCMVFYSRDAKLPASRSIRNLFGSGSLRATEGNRVTGVYELSLCHVADAGSPGMQRRRRRVLDTSVAYVRGEENLAGWRPRSDSLILDHQWELEKLSLLQEVEKTRHYLLLREKLETTQRPVPEVLSPASSEDSESRSSSGASSPLSAEGQPSPLEVPNERQRELAVKCLRLLMHTFNREYTHSHVCISASESKLSEMSVTLMRDPSMSPLGAATLTPSSTCPSLIEGRYGATDVRTPQPCSRPASPEPELLPELDSKKTPSPVRATETEKEPQRLLVPDIQEIRVSPIVSKKGYLHFLEPHTAGWAKRFVVVRRPYAYMYNSDKDTVERFVLNLSTAQVEYSEDQQAMLKTPNTFAVCTEHRGILLQANSDKDMHDWLYAFNPLLAGTIRSKLSRRRSAQMRV.

Positions 5-354 (SVKVAVRVRP…LRYADRAKQI (350 aa)) constitute a Kinesin motor domain. ATP contacts are provided by Gly102, Lys103, Ser104, Tyr105, and Ser215. Residue Ser104 coordinates Mg(2+). Residues 439-466 (SEEAIERLKETEKIIAELNETWEEKLRR) are a coiled coil. Residues 525–581 (TRVGREDAERRQDIVLSGHFIKEEHCIFRSDSRGGGEAVVTLEPCEGADTYVNGKKV) form the FHA domain. Coiled-coil stretches lie at residues 637–671 (EKQGIDMKQEMEQRLQELEDQYRREREEATYLLEQ) and 811–831 (LEKLRQRLDLMREMYDRAAEV). The required for interaction with CALM1, PPFIA2 and TANC2 stretch occupies residues 657–1105 (QYRREREEAT…LCKDVLSPLR (449 aa)). 2 disordered regions span residues 1424–1462 (PVPEVLSPASSEDSESRSSSGASSPLSAEGQPSPLEVPN) and 1536–1576 (TDVR…EKEP). A compositionally biased stretch (low complexity) spans 1429 to 1453 (LSPASSEDSESRSSSGASSPLSAEG). Positions 1592 to 1690 (IVSKKGYLHF…WLYAFNPLLA (99 aa)) constitute a PH domain.

It belongs to the TRAFAC class myosin-kinesin ATPase superfamily. Kinesin family. Unc-104 subfamily. As to quaternary structure, dimeric motor; dimerization is required for ATP-driven processive motility. Monomer in vitro. Interacts with PPFIA1 and PPFIA4. Interacts with CALM1; the interaction is increased in presence of calcium and increases neuronal dense core vesicles motility. Interacts with PPFIA2 and TANC2; both interactions allow the recruitment of neuronal dense core vesicles to dendritic spines and decrease in presence of calcium. Interacts with SYT4 (unphosphorylated) and SYT11; both interactions increase in presence of calcium. Interacts with MADD.

The protein resides in the cytoplasm. It is found in the cytoskeleton. It localises to the cell projection. Its subcellular location is the neuron projection. The protein localises to the axon. The protein resides in the perinuclear region. It is found in the synapse. It localises to the cytoplasmic vesicle. Its subcellular location is the secretory vesicle. The protein localises to the neuronal dense core vesicle membrane. It carries out the reaction ATP + H2O + a kinesin associated with a microtubule at position (n) = ADP + phosphate a kinesin associated with a microtubule at position (n+1, toward the plus end).. Kinesin motor with a plus-end-directed microtubule motor activity, involved in anterograde axonal transport of synaptic vesicle precursors. Also required for neuronal dense core vesicles (DCVs) transport to the dendritic spines and axons. The interaction calcium-dependent with CALM1 increases vesicle motility and interaction with the scaffolding proteins PPFIA2 and TANC2 recruits DCVs to synaptic sites. The protein is Kinesin-like protein KIF1A of Rattus norvegicus (Rat).